The following is a 401-amino-acid chain: Tyrosine--tRNA ligase (401 aa).

A 'HIGH' region motif is present at residues 42 to 51; sequence PTAPDLHLGH. Residues 226 to 230 carry the 'KMSKS' region motif; the sequence is KMSKS. Lys-229 is a binding site for ATP. One can recognise an S4 RNA-binding domain in the interval 336–397; sequence IALAQLLKQI…GKRRIAKLSI (62 aa).

This sequence belongs to the class-I aminoacyl-tRNA synthetase family. TyrS type 2 subfamily. As to quaternary structure, homodimer.

Its subcellular location is the cytoplasm. It carries out the reaction tRNA(Tyr) + L-tyrosine + ATP = L-tyrosyl-tRNA(Tyr) + AMP + diphosphate + H(+). Its function is as follows. Catalyzes the attachment of tyrosine to tRNA(Tyr) in a two-step reaction: tyrosine is first activated by ATP to form Tyr-AMP and then transferred to the acceptor end of tRNA(Tyr). This Legionella pneumophila (strain Lens) protein is Tyrosine--tRNA ligase.